We begin with the raw amino-acid sequence, 653 residues long: Ran-binding protein 9 (653 aa).

Residues 1-21 (MSGQPPPPPPQQQPPPPPPPA) are compositionally biased toward pro residues. Positions 1 to 62 (MSGQPPPPPP…SAAAPFPHGD (62 aa)) are disordered. Residues 22–57 (SAAAPATAPPGLAVGPGPAAGVPVPGLAAGSSAAAP) show a composition bias toward low complexity. Positions 72–259 (LQRRLKRLYP…VDANFGQHPF (188 aa)) constitute a B30.2/SPRY domain. The LisH domain maps to 290-322 (WQTMIQKMVSSYLVHHGYCATAEAFARSTDQTV). The interaction with CALB1 stretch occupies residues 326–332 (LASIKNR). One can recognise a CTLH domain in the interval 328–385 (SIKNRQRIQKLVLAGRMGEAIETTQQLYPSLLERNPNLLFTLKVRQFIEMVNGTDSEV). An N6-acetyllysine modification is found at Lys330. The interval 386–422 (RCLGGRSPKSQDSYPVSPRPFSSPSMSPSHGMSIHSL) is disordered. The segment covering 398–421 (SYPVSPRPFSSPSMSPSHGMSIHS) has biased composition (low complexity). Ser402 and Ser412 each carry phosphoserine. The segment at 539–653 (AAIERMIHFG…AFATVEDYLH (115 aa)) is interaction with FMR1.

This sequence belongs to the RANBP9/10 family. In terms of assembly, part of a complex consisting of RANBP9, MKLN1 and GID8. Identified in the CTLH complex that contains GID4, RANBP9 and/or RANBP10, MKLN1, MAEA, RMND5A (or alternatively its paralog RMND5B), GID8, ARMC8, WDR26 and YPEL5. Within this complex, MAEA, RMND5A (or alternatively its paralog RMND5B), GID8, WDR26, and RANBP9 and/or RANBP10 form the catalytic core, while GID4, MKLN1, ARMC8 and YPEL5 have ancillary roles. Interacts with GTP-bound Ran, AR, CDC2L1/p110C, CALB1, S100A7, USP11, SOS1 or SOS2, GID8, and FMR1. Interacts with the Dyrk kinases HIPK2, DYRK1A, and DYRK1B. Interacts with TP73 isoform Alpha but not with TP53. Interacts with the HGF receptor MET and the integrins ITGB1 and ITGB2, but not with ITGAL. Part of a complex consisting of RANBP9, RAN, DYRK1B and COPS5. Directly interacts with RANBP10. Interacts with YPEL5. Interacts with MKLN1. Interacts with DDX4. Interacts with NGFR. Interacts with Tex19.1 and, probably, Tex19.2. Post-translationally, phosphorylated in response to stress. In terms of processing, ubiquitinated. Polyubiquitination targets the protein for rapid degradation via the ubiquitin system. Ubiquitously expressed, with highest levels in maturating spermatocytes.

It is found in the cytoplasm. It localises to the cell membrane. The protein localises to the nucleus. Its function is as follows. May act as scaffolding protein, and as adapter protein to couple membrane receptors to intracellular signaling pathways. Acts as a mediator of cell spreading and actin cytoskeleton rearrangement. Core component of the CTLH E3 ubiquitin-protein ligase complex that selectively accepts ubiquitin from UBE2H and mediates ubiquitination and subsequent proteasomal degradation of the transcription factor HBP1. May be involved in signaling of ITGB2/LFA-1 and other integrins. Enhances HGF-MET signaling by recruiting Sos and activating the Ras pathway. Enhances dihydrotestosterone-induced transactivation activity of AR, as well as dexamethasone-induced transactivation activity of NR3C1, but not affect estrogen-induced transactivation. Stabilizes TP73 isoform Alpha, probably by inhibiting its ubiquitination, and increases its proapoptotic activity. Inhibits the kinase activity of DYRK1A and DYRK1B. Inhibits FMR1 binding to RNA. This Mus musculus (Mouse) protein is Ran-binding protein 9.